A 361-amino-acid chain; its full sequence is D-malate dehydrogenase [decarboxylating] (361 aa).

The Mn(2+) site is built by Asp-224, Asp-248, and Asp-252.

The protein belongs to the isocitrate and isopropylmalate dehydrogenases family. Mg(2+) is required as a cofactor. It depends on Mn(2+) as a cofactor.

The protein localises to the cytoplasm. The enzyme catalyses (R)-malate + NAD(+) = pyruvate + CO2 + NADH. Catalyzes the NAD(+)-dependent oxidative decarboxylation of D-malate into pyruvate. Is essential for aerobic growth on D-malate as the sole carbon source. But is not required for anaerobic D-malate utilization, although DmlA is expressed and active in those conditions. Appears to be not able to use L-tartrate as a substrate for dehydrogenation instead of D-malate. This Escherichia coli (strain K12) protein is D-malate dehydrogenase [decarboxylating] (dmlA).